Reading from the N-terminus, the 767-residue chain is Cation/H(+) antiporter 27 (767 aa).

Transmembrane regions (helical) follow at residues 39–59 (LPLL…FQFL), 63–83 (FGKF…PSVI), 99–119 (VYII…ITTC), 135–155 (INGI…AILI), 173–193 (HVAI…LSSL), 205–225 (LASM…NIAI), 242–262 (VLQM…MLWM), 280–300 (ICVL…PYFF), 323–343 (IGCF…GLNI), 371–391 (IALP…VGFI), and 415–435 (KSFG…IVIV).

This sequence belongs to the monovalent cation:proton antiporter 2 (CPA2) transporter (TC 2.A.37) family. CHX (TC 2.A.37.4) subfamily. Specifically expressed in pollen.

The protein resides in the membrane. Functionally, may operate as a cation/H(+) antiporter. This chain is Cation/H(+) antiporter 27 (CHX27), found in Arabidopsis thaliana (Mouse-ear cress).